The chain runs to 504 residues: UDP-glycosyltransferase UGT4 (504 aa).

The N-terminal stretch at 1–23 (MTLLRDLLLLYINSLLFINPSIG) is a signal peptide. Residues 24 to 474 (ENILVFLPTK…SAVIDLYWFQ (451 aa)) are Lumenal-facing. N-linked (GlcNAc...) asparagine glycosylation is found at Asn54, Asn66, Asn69, and Asn422. Residues 475–495 (YILLDIILFYSLIVLILLCIL) traverse the membrane as a helical segment. At 496–504 (RIFFRMLTK) the chain is on the cytoplasmic side.

This sequence belongs to the UDP-glycosyltransferase family.

It is found in the microsome membrane. Functionally, catalyzes the transfer of a glycosyl group from a UDP-sugar to an acceptor molecule. This chain is UDP-glycosyltransferase UGT4, found in Dactylopius coccus (Cochineal).